A 615-amino-acid polypeptide reads, in one-letter code: Cysteine-rich receptor-like protein kinase 1 (615 aa).

Positions 1 to 28 (MQICASIAQFLAWVSFLVLLATVGSSSS) are cleaved as a signal peptide. 2 consecutive Gnk2-homologous domains span residues 29-131 (SESL…DRDF) and 137-237 (DPTF…THKF). The Extracellular segment spans residues 29 to 266 (SESLLNCQPL…SFFPHLSDRD (238 aa)). N-linked (GlcNAc...) asparagine glycosylation is found at asparagine 100 and asparagine 165. A helical transmembrane segment spans residues 267-287 (VTRLAIAAISLSILTSLGAFI). Residues 288–615 (SYRRVSRKRK…VLMPDEETRV (328 aa)) are Cytoplasmic-facing. Positions 318 to 602 (FHDSMKLGQG…FEYPKQPPFL (285 aa)) constitute a Protein kinase domain. Residues 324 to 332 (LGQGGAGSV) and lysine 346 contribute to the ATP site. Residue aspartate 443 is the Proton acceptor of the active site.

This sequence belongs to the protein kinase superfamily. Ser/Thr protein kinase family. CRK subfamily. Expressed in the whole plant at low levels.

It is found in the membrane. It carries out the reaction L-seryl-[protein] + ATP = O-phospho-L-seryl-[protein] + ADP + H(+). The catalysed reaction is L-threonyl-[protein] + ATP = O-phospho-L-threonyl-[protein] + ADP + H(+). In Arabidopsis thaliana (Mouse-ear cress), this protein is Cysteine-rich receptor-like protein kinase 1.